The following is a 398-amino-acid chain: Bifunctional enzyme IspD/IspF (398 aa).

The interval 1 to 237 (MSISIAAIIL…QKKMQMFPDI (237 aa)) is 2-C-methyl-D-erythritol 4-phosphate cytidylyltransferase. The interval 238–398 (RVGNGYDVHS…SVLYPGEIPQ (161 aa)) is 2-C-methyl-D-erythritol 2,4-cyclodiphosphate synthase. The a divalent metal cation site is built by Asp-244 and His-246. Residues 244–246 (DVH) and 270–271 (HS) contribute to the 4-CDP-2-C-methyl-D-erythritol 2-phosphate site. His-278 contacts a divalent metal cation. 4-CDP-2-C-methyl-D-erythritol 2-phosphate contacts are provided by residues 292-294 (DIG), 368-371 (TTNE), Phe-375, and Arg-378.

It in the N-terminal section; belongs to the IspD/TarI cytidylyltransferase family. IspD subfamily. The protein in the C-terminal section; belongs to the IspF family. A divalent metal cation is required as a cofactor.

The enzyme catalyses 2-C-methyl-D-erythritol 4-phosphate + CTP + H(+) = 4-CDP-2-C-methyl-D-erythritol + diphosphate. It carries out the reaction 4-CDP-2-C-methyl-D-erythritol 2-phosphate = 2-C-methyl-D-erythritol 2,4-cyclic diphosphate + CMP. Its pathway is isoprenoid biosynthesis; isopentenyl diphosphate biosynthesis via DXP pathway; isopentenyl diphosphate from 1-deoxy-D-xylulose 5-phosphate: step 2/6. The protein operates within isoprenoid biosynthesis; isopentenyl diphosphate biosynthesis via DXP pathway; isopentenyl diphosphate from 1-deoxy-D-xylulose 5-phosphate: step 4/6. Functionally, bifunctional enzyme that catalyzes the formation of 4-diphosphocytidyl-2-C-methyl-D-erythritol from CTP and 2-C-methyl-D-erythritol 4-phosphate (MEP) (IspD), and catalyzes the conversion of 4-diphosphocytidyl-2-C-methyl-D-erythritol 2-phosphate (CDP-ME2P) to 2-C-methyl-D-erythritol 2,4-cyclodiphosphate (ME-CPP) with a corresponding release of cytidine 5-monophosphate (CMP) (IspF). The protein is Bifunctional enzyme IspD/IspF of Bartonella tribocorum (strain CIP 105476 / IBS 506).